The following is an 82-amino-acid chain: MAVFHDEVEIEDFQYDEDSETYFYPCPCGDNFSITKEDLENGEDVATCPSCSLIIKVIYDKDQFMCGETVPAPSTNKELVKC.

The DPH-type MB domain maps to 4–60 (FHDEVEIEDFQYDEDSETYFYPCPCGDNFSITKEDLENGEDVATCPSCSLIIKVIYD). Positions 26, 28, 48, and 51 each coordinate Fe cation.

This sequence belongs to the DPH3 family. As to quaternary structure, component of the 2-(3-amino-3-carboxypropyl)histidine synthase complex composed of DPH1, DPH2, DPH3 and a NADH-dependent reductase. Interacts with SERGEF. The cofactor is Fe(2+).

The protein localises to the cytoplasm. Its subcellular location is the nucleus. The enzyme catalyses [3Fe-4S](1+)-[protein] + Fe(2+)-[Dph3] = [3Fe-4S](0)-[protein] + Fe(3+)-[Dph3]. It carries out the reaction 2 [3Fe-4S](0)-[protein] + 2 Fe(2+)-[Dph3] + NADH = 2 [4Fe-4S](1+)-[protein] + 2 [Dph3] + NAD(+) + H(+). It functions in the pathway protein modification; peptidyl-diphthamide biosynthesis. In terms of biological role, required for the first step of diphthamide biosynthesis, a post-translational modification of histidine which occurs in elongation factor 2. DPH1 and DPH2 transfer a 3-amino-3-carboxypropyl (ACP) group from S-adenosyl-L-methionine (SAM) to a histidine residue, the reaction is assisted by a reduction system comprising DPH3 and a NADH-dependent reductase. Acts as an electron donor to reduce the Fe-S cluster in DPH1-DPH2 keeping the [4Fe-4S] clusters in the active and reduced state. Restores iron to DPH1-DPH2 iron-sulfur clusters which have degraded from [4Fe-4S] to [3Fe-4S] by donating an iron atom to reform [4Fe-4S] clusters, in a manner dependent on the presence of elongation factor 2 and SAM. Associates with the elongator complex and is required for tRNA Wobble base modifications mediated by the elongator complex. The elongator complex is required for multiple tRNA modifications, including mcm5U (5-methoxycarbonylmethyl uridine), mcm5s 2U (5-methoxycarbonylmethyl-2-thiouridine), and ncm5U (5-carbamoylmethyl uridine). In Cricetulus griseus (Chinese hamster), this protein is Diphthamide biosynthesis protein 3 (DPH3).